A 564-amino-acid polypeptide reads, in one-letter code: Type 2 DNA topoisomerase 6 subunit B (564 aa).

ATP is bound by residues asparagine 46, aspartate 78, 99–100, 109–116, and lysine 471; these read TK and GQQGIGIS.

Belongs to the TOP6B family. Homodimer. Heterotetramer of two Top6A and two Top6B chains.

It catalyses the reaction ATP-dependent breakage, passage and rejoining of double-stranded DNA.. Its function is as follows. Relaxes both positive and negative superturns and exhibits a strong decatenase activity. This Pyrococcus abyssi (strain GE5 / Orsay) protein is Type 2 DNA topoisomerase 6 subunit B.